A 1116-amino-acid chain; its full sequence is Auxin response factor 21 (1116 aa).

The segment at residues 132–234 (FCKTLTASDT…QLLLGIRRAN (103 aa)) is a DNA-binding region (TF-B3). A disordered region spans residues 763-812 (KTDDVPSTSTSPSTNSNPVLLQSIPSSSKNQSLTTAGKTSQSSVVLGPTI). The segment covering 768-780 (PSTSTSPSTNSNP) has biased composition (low complexity). Positions 781–806 (VLLQSIPSSSKNQSLTTAGKTSQSSV) are enriched in polar residues. Residues 998-1082 (RTYTKVHKRG…RCIRILSPQE (85 aa)) form the PB1 domain.

Belongs to the ARF family. In terms of assembly, homodimers and heterodimers. In terms of tissue distribution, expressed in roots, culms, leaves and young panicles.

The protein localises to the nucleus. Its function is as follows. Auxin response factors (ARFs) are transcriptional factors that bind specifically to the DNA sequence 5'-TGTCTC-3' found in the auxin-responsive promoter elements (AuxREs). In Oryza sativa subsp. japonica (Rice), this protein is Auxin response factor 21 (ARF21).